A 246-amino-acid chain; its full sequence is MyoD family inhibitor domain-containing protein (246 aa).

Disordered stretches follow at residues methionine 1–threonine 93 and lysine 134–glutamate 164. Residues methionine 1–cysteine 170 are Extracellular-facing. Residues glutamate 63–glutamate 87 show a composition bias toward polar residues. Residues glutamine 74–serine 246 form the MDFI domain. The chain crosses the membrane as a helical span at residues isoleucine 171 to glycine 188. Topologically, residues glutamine 189–serine 246 are cytoplasmic.

It belongs to the MDFI family. In terms of tissue distribution, expressed broadly at a low level in the early embryo.

Its subcellular location is the cytoplasm. The protein localises to the cell membrane. The protein resides in the secreted. Required to control the activity of various transcription factors through their sequestration in the cytoplasm. Retains nuclear Zic proteins in the cytoplasm and inhibits their transcriptional activation. Required for dorsoanterior development. Necessary for siamois to activate downstream target genes, including gsc, during execution of the dorsal organizer program. Also regulates the transcriptional activity of TCF7L1/TCF3 by interacting directly with TCF7L1/TCF3 and preventing it from binding DNA. Involved in the development of lymphatic vessel valves. It is required to promote lymphatic endothelial cell migration, in a process that involves down-regulation of integrin beta 1 activation and control of cell adhesion to the extracellular matrix. The chain is MyoD family inhibitor domain-containing protein from Xenopus laevis (African clawed frog).